Here is a 349-residue protein sequence, read N- to C-terminus: Glycerol-1-phosphate dehydrogenase [NAD(P)+] (349 aa).

Residues 95–99 (GKSID) and 117–120 (TSPS) each bind NAD(+). Substrate is bound at residue aspartate 122. NAD(+) is bound at residue serine 126. Aspartate 169 contacts substrate. Aspartate 169 and histidine 249 together coordinate Zn(2+). Histidine 253 lines the substrate pocket. A Zn(2+)-binding site is contributed by histidine 265.

This sequence belongs to the glycerol-1-phosphate dehydrogenase family. Homodimer. It depends on Zn(2+) as a cofactor.

It localises to the cytoplasm. The enzyme catalyses sn-glycerol 1-phosphate + NAD(+) = dihydroxyacetone phosphate + NADH + H(+). It carries out the reaction sn-glycerol 1-phosphate + NADP(+) = dihydroxyacetone phosphate + NADPH + H(+). It participates in membrane lipid metabolism; glycerophospholipid metabolism. In terms of biological role, catalyzes the NAD(P)H-dependent reduction of dihydroxyacetonephosphate (DHAP or glycerone phosphate) to glycerol 1-phosphate (G1P). The G1P thus generated is used as the glycerophosphate backbone of phospholipids in the cellular membranes of Archaea. The polypeptide is Glycerol-1-phosphate dehydrogenase [NAD(P)+] (Hyperthermus butylicus (strain DSM 5456 / JCM 9403 / PLM1-5)).